The primary structure comprises 156 residues: Endoribonuclease YbeY (156 aa).

Residues His114, His118, and His124 each contribute to the Zn(2+) site.

It belongs to the endoribonuclease YbeY family. It depends on Zn(2+) as a cofactor.

Its subcellular location is the cytoplasm. Functionally, single strand-specific metallo-endoribonuclease involved in late-stage 70S ribosome quality control and in maturation of the 3' terminus of the 16S rRNA. This is Endoribonuclease YbeY from Sodalis glossinidius (strain morsitans).